Reading from the N-terminus, the 622-residue chain is Protein translocase subunit SecD (622 aa).

The next 6 helical transmembrane spans lie at 6–26, 460–480, 485–505, 512–532, 559–579, and 584–604; these read FKIG…YPTV, AGLR…IFYY, MIAD…LAAF, PGIA…VLIF, AIFD…SFGV, and GFAV…IVIT.

This sequence belongs to the SecD/SecF family. SecD subfamily. As to quaternary structure, forms a complex with SecF. Part of the essential Sec protein translocation apparatus which comprises SecA, SecYEG and auxiliary proteins SecDF. Other proteins may also be involved.

The protein resides in the cell inner membrane. In terms of biological role, part of the Sec protein translocase complex. Interacts with the SecYEG preprotein conducting channel. SecDF uses the proton motive force (PMF) to complete protein translocation after the ATP-dependent function of SecA. The polypeptide is Protein translocase subunit SecD (Rhodothermus marinus (strain ATCC 43812 / DSM 4252 / R-10) (Rhodothermus obamensis)).